Here is a 286-residue protein sequence, read N- to C-terminus: Putative WUSCHEL-related homeobox 2 (286 aa).

Residues 1 to 25 (MAPAVQQQQSGGGGGSTGAAAVGST) form a disordered region. Residues 23 to 87 (GSTTRWCPTP…NHKARDRQKL (65 aa)) constitute a DNA-binding region (homeobox; WUS-type).

Belongs to the WUS homeobox family.

Its subcellular location is the nucleus. Functionally, transcription factor which may be involved in developmental processes. This is Putative WUSCHEL-related homeobox 2 (WOX2) from Oryza sativa subsp. japonica (Rice).